A 364-amino-acid polypeptide reads, in one-letter code: Fructose-bisphosphate aldolase B (364 aa).

Substrate contacts are provided by Arg56 and Lys147. The active-site Proton acceptor is Glu188. Lys230 functions as the Schiff-base intermediate with dihydroxyacetone-P in the catalytic mechanism.

This sequence belongs to the class I fructose-bisphosphate aldolase family. Homotetramer.

It localises to the cytoplasm. Its subcellular location is the cytoskeleton. The protein resides in the microtubule organizing center. It is found in the centrosome. The protein localises to the centriolar satellite. It catalyses the reaction beta-D-fructose 1,6-bisphosphate = D-glyceraldehyde 3-phosphate + dihydroxyacetone phosphate. It participates in carbohydrate degradation; glycolysis; D-glyceraldehyde 3-phosphate and glycerone phosphate from D-glucose: step 4/4. The polypeptide is Fructose-bisphosphate aldolase B (ALDOB) (Gallus gallus (Chicken)).